The sequence spans 279 residues: DegV domain-containing protein SACOL1460 (279 aa).

The 275-residue stretch at 4-278 folds into the DegV domain; that stretch reads QIIVTDSTSD…QGAIGLVVLK (275 aa). Thr61 and Ser93 together coordinate hexadecanoate.

In terms of biological role, may bind long-chain fatty acids, such as palmitate, and may play a role in lipid transport or fatty acid metabolism. This Staphylococcus aureus (strain COL) protein is DegV domain-containing protein SACOL1460.